A 428-amino-acid chain; its full sequence is MQTYTIKPAQSVRGEIAVPGDKSISHRSIMLGSIARGTTTVCGFLRGEDNMATLNAFRAMGVDVRDDGETLRIEGKGLAGLSEPTDVLDCGNSGTSMRLMTGLLAGQRFFSVLTGDQYLRNRPMKRVLEPLSRMGATIFGRAGGDKAPLAVVGRGLTGVTYASPVSSAQVKSAILLAGLYADGETEVTEPHLSRDHSERMLRYFGADIETFAGGVKVRGRELTGRDITVPGDISSAAFFIVAALIVPGSELLIKGVGVNPTRTGIIDILTAMGGSIELLNCREISGEPVADLLVRASELKGIEIGGDLVPRAIDEFPVICVAASCAEGRTVIRDARELRVKETDRIAAMAVNLRKAGVDVVETENGMELIGVERLEGCTAESFGDHRIAMSMLIAGLAARGEITVNDTECIATSFPNFIALLEKVVVP.

Lysine 22, serine 23, and arginine 27 together coordinate 3-phosphoshikimate. A phosphoenolpyruvate-binding site is contributed by lysine 22. Phosphoenolpyruvate is bound by residues glycine 94 and arginine 122. 3-phosphoshikimate is bound by residues serine 167, glutamine 169, aspartate 314, and lysine 341. Glutamine 169 serves as a coordination point for phosphoenolpyruvate. Residue aspartate 314 is the Proton acceptor of the active site. Residues arginine 345 and arginine 387 each coordinate phosphoenolpyruvate.

The protein belongs to the EPSP synthase family. Monomer.

Its subcellular location is the cytoplasm. The enzyme catalyses 3-phosphoshikimate + phosphoenolpyruvate = 5-O-(1-carboxyvinyl)-3-phosphoshikimate + phosphate. Its pathway is metabolic intermediate biosynthesis; chorismate biosynthesis; chorismate from D-erythrose 4-phosphate and phosphoenolpyruvate: step 6/7. In terms of biological role, catalyzes the transfer of the enolpyruvyl moiety of phosphoenolpyruvate (PEP) to the 5-hydroxyl of shikimate-3-phosphate (S3P) to produce enolpyruvyl shikimate-3-phosphate and inorganic phosphate. The chain is 3-phosphoshikimate 1-carboxyvinyltransferase from Geotalea uraniireducens (strain Rf4) (Geobacter uraniireducens).